Consider the following 529-residue polypeptide: DEP domain-containing protein 1B (529 aa).

The region spanning 24 to 108 (FRAGMPLRKH…DDGHLYRFPP (85 aa)) is the DEP domain. The region spanning 192 to 393 (ARLQKVLGLD…FLMDNYQEIL (202 aa)) is the Rho-GAP domain.

In Gallus gallus (Chicken), this protein is DEP domain-containing protein 1B (DEPDC1B).